Reading from the N-terminus, the 214-residue chain is tRNA (guanine-N(7)-)-methyltransferase (214 aa).

S-adenosyl-L-methionine contacts are provided by Glu43, Glu68, Asp95, and Asp117. Residue Asp117 is part of the active site. Substrate-binding positions include Lys121, Asp153, and 191 to 194 (TEYE).

The protein belongs to the class I-like SAM-binding methyltransferase superfamily. TrmB family.

It carries out the reaction guanosine(46) in tRNA + S-adenosyl-L-methionine = N(7)-methylguanosine(46) in tRNA + S-adenosyl-L-homocysteine. The protein operates within tRNA modification; N(7)-methylguanine-tRNA biosynthesis. Catalyzes the formation of N(7)-methylguanine at position 46 (m7G46) in tRNA. The polypeptide is tRNA (guanine-N(7)-)-methyltransferase (Lachnoclostridium phytofermentans (strain ATCC 700394 / DSM 18823 / ISDg) (Clostridium phytofermentans)).